We begin with the raw amino-acid sequence, 413 residues long: Gamma-glutamyl phosphate reductase (413 aa).

Belongs to the gamma-glutamyl phosphate reductase family.

The protein resides in the cytoplasm. It carries out the reaction L-glutamate 5-semialdehyde + phosphate + NADP(+) = L-glutamyl 5-phosphate + NADPH + H(+). Its pathway is amino-acid biosynthesis; L-proline biosynthesis; L-glutamate 5-semialdehyde from L-glutamate: step 2/2. In terms of biological role, catalyzes the NADPH-dependent reduction of L-glutamate 5-phosphate into L-glutamate 5-semialdehyde and phosphate. The product spontaneously undergoes cyclization to form 1-pyrroline-5-carboxylate. In Salinispora tropica (strain ATCC BAA-916 / DSM 44818 / JCM 13857 / NBRC 105044 / CNB-440), this protein is Gamma-glutamyl phosphate reductase.